Here is a 254-residue protein sequence, read N- to C-terminus: Insulin-like growth factor-binding protein 4 (254 aa).

Residues Met1–Gly21 form the signal peptide. The IGFBP N-terminal domain maps to Glu23–Leu103. Intrachain disulfides connect Cys27–Cys53, Cys30–Cys55, Cys38–Cys56, Cys44–Cys59, Cys67–Cys80, and Cys74–Cys100. N-linked (GlcNAc...) asparagine glycosylation is present at Asn125. Disulfide bonds link Cys131-Cys138, Cys170-Cys200, Cys211-Cys222, and Cys224-Cys245. Residues Gln167–Cys245 form the Thyroglobulin type-1 domain. The residue at position 251 (Ser251) is a Phosphoserine.

As to quaternary structure, binds IGF2 more than IGF1.

The protein resides in the secreted. In terms of biological role, IGF-binding proteins prolong the half-life of the IGFs and have been shown to either inhibit or stimulate the growth promoting effects of the IGFs on cell culture. They alter the interaction of IGFs with their cell surface receptors. This chain is Insulin-like growth factor-binding protein 4 (Igfbp4), found in Mus musculus (Mouse).